Here is a 171-residue protein sequence, read N- to C-terminus: Adenine phosphoribosyltransferase (171 aa).

This sequence belongs to the purine/pyrimidine phosphoribosyltransferase family. As to quaternary structure, homodimer.

It localises to the cytoplasm. It carries out the reaction AMP + diphosphate = 5-phospho-alpha-D-ribose 1-diphosphate + adenine. It functions in the pathway purine metabolism; AMP biosynthesis via salvage pathway; AMP from adenine: step 1/1. Functionally, catalyzes a salvage reaction resulting in the formation of AMP, that is energically less costly than de novo synthesis. The polypeptide is Adenine phosphoribosyltransferase (Mycoplasma mobile (strain ATCC 43663 / 163K / NCTC 11711) (Mesomycoplasma mobile)).